The following is a 305-amino-acid chain: Nucleotide-binding protein Mpe_A3336 (305 aa).

An ATP-binding site is contributed by 22–29 (GISGSGKS). 74 to 77 (DVRS) contacts GTP.

Belongs to the RapZ-like family.

Functionally, displays ATPase and GTPase activities. The chain is Nucleotide-binding protein Mpe_A3336 from Methylibium petroleiphilum (strain ATCC BAA-1232 / LMG 22953 / PM1).